We begin with the raw amino-acid sequence, 374 residues long: Peptidoglycan recognition protein 4 (374 aa).

Positions methionine 1–serine 20 are cleaved as a signal peptide. 3 N-linked (GlcNAc...) asparagine glycosylation sites follow: asparagine 39, asparagine 93, and asparagine 146. 2 N-acetylmuramoyl-L-alanine amidase domains span residues arginine 76 to proline 212 and proline 233 to glycine 359. Intrachain disulfides connect cysteine 211–cysteine 333, cysteine 227–cysteine 271, and cysteine 247–cysteine 253. A peptidoglycan-binding site is contributed by tyrosine 275. Interaction with murein stretches follow at residues glutamine 294–aspartate 303 and asparagine 354–threonine 355.

The protein belongs to the N-acetylmuramoyl-L-alanine amidase 2 family. In terms of assembly, homodimer; disulfide-linked. Heterodimer with PGLYRP3; disulfide-linked. In terms of tissue distribution, ubiquitous.

The protein localises to the secreted. Functionally, pattern receptor that binds to murein peptidoglycans (PGN) of Gram-positive bacteria. Has bactericidal activity towards Gram-positive bacteria. May kill Gram-positive bacteria by interfering with peptidoglycan biosynthesis. Also binds to Gram-negative bacteria, and has bacteriostatic activity towards Gram-negative bacteria. Plays a role in innate immunity. The chain is Peptidoglycan recognition protein 4 (Pglyrp4) from Mus musculus (Mouse).